Consider the following 296-residue polypeptide: UDP-N-acetylenolpyruvoylglucosamine reductase (296 aa).

Positions 26 to 191 (RIGGPANYFK…LSATFRLSRN (166 aa)) constitute an FAD-binding PCMH-type domain. Arginine 170 is an active-site residue. Cysteine 218 serves as the catalytic Proton donor. Residue glutamate 287 is part of the active site.

It belongs to the MurB family. FAD serves as cofactor.

It localises to the cytoplasm. It catalyses the reaction UDP-N-acetyl-alpha-D-muramate + NADP(+) = UDP-N-acetyl-3-O-(1-carboxyvinyl)-alpha-D-glucosamine + NADPH + H(+). Its pathway is cell wall biogenesis; peptidoglycan biosynthesis. Functionally, cell wall formation. The protein is UDP-N-acetylenolpyruvoylglucosamine reductase of Chlamydia abortus (strain DSM 27085 / S26/3) (Chlamydophila abortus).